A 350-amino-acid chain; its full sequence is Deoxyhypusine synthase-like protein (350 aa).

This sequence belongs to the deoxyhypusine synthase family.

This Chlorobaculum parvum (strain DSM 263 / NCIMB 8327) (Chlorobium vibrioforme subsp. thiosulfatophilum) protein is Deoxyhypusine synthase-like protein.